The following is a 450-amino-acid chain: 23S rRNA (uracil(1939)-C(5))-methyltransferase RlmD (450 aa).

Residues 12–70 form the TRAM domain; that stretch reads SKQLSAKLSLSVNQLDHLGAGIAQHQGKVVFIPGALPDETVTVQLTEQKKNYARAKLIK. Residues Cys-83, Cys-89, Cys-92, and Cys-171 each contribute to the [4Fe-4S] cluster site. S-adenosyl-L-methionine-binding residues include Gln-283, Phe-312, Asn-317, Glu-333, Asp-360, and Asp-380. Cys-406 serves as the catalytic Nucleophile.

The protein belongs to the class I-like SAM-binding methyltransferase superfamily. RNA M5U methyltransferase family. RlmD subfamily.

It carries out the reaction uridine(1939) in 23S rRNA + S-adenosyl-L-methionine = 5-methyluridine(1939) in 23S rRNA + S-adenosyl-L-homocysteine + H(+). Functionally, catalyzes the formation of 5-methyl-uridine at position 1939 (m5U1939) in 23S rRNA. In Shewanella baltica (strain OS195), this protein is 23S rRNA (uracil(1939)-C(5))-methyltransferase RlmD.